The sequence spans 310 residues: Olfactory receptor 5P54 (310 aa).

Over 1 to 25 (MNGGNHTSMTELFILGPTEDPTFCI) the chain is Extracellular. Residue Asn5 is glycosylated (N-linked (GlcNAc...) asparagine). Residues 26-46 (AFFVIFLGVYMVTLVGNISII) traverse the membrane as a helical segment. Residues 47–54 (TLIRISSQ) lie on the Cytoplasmic side of the membrane. Residues 55–75 (LHTPVYLFLNHLAFVDILYST) form a helical membrane-spanning segment. Topologically, residues 76 to 99 (LVSVIMLMELLEHELALPVAACAA) are extracellular. Cys97 and Cys189 are oxidised to a cystine. The chain crosses the membrane as a helical span at residues 100-120 (ELCITVLFGSSECFLLAAMAY). Residues 121–133 (DCYVAICSPLLYS) lie on the Cytoplasmic side of the membrane. A helical transmembrane segment spans residues 134–154 (TLMSSRVCFLLLGMSYVGGCM). The Extracellular portion of the chain corresponds to 155–196 (NGWIFTGCLLNLSFYGPYQIDHFFCDFSPLLKLSCSDVSIIG). Asn165 carries an N-linked (GlcNAc...) asparagine glycan. Residues 197–217 (IIPSISSGSIIVVTVLVIAVF) form a helical membrane-spanning segment. Residues 218–237 (YICILMTILKMHSTDGCHKA) are Cytoplasmic-facing. The helical transmembrane segment at 238–258 (FSTCNSYLTAVTLYYGTITFI) threads the bilayer. Residues 259 to 271 (YVMPKSNYSTEKN) are Extracellular-facing. Asn265 is a glycosylation site (N-linked (GlcNAc...) asparagine). A helical membrane pass occupies residues 272-292 (KVLSEFYTVVIPMLNHLIYSL). Residues 293–310 (KNRDVKDALRKAIVRVYT) lie on the Cytoplasmic side of the membrane.

It belongs to the G-protein coupled receptor 1 family.

The protein resides in the cell membrane. In terms of biological role, potential odorant receptor. The polypeptide is Olfactory receptor 5P54 (Mus musculus (Mouse)).